The chain runs to 373 residues: MTEELTTVRDACARTLENTARTLHLGASGTEFVAAFRAMTDHWGAARPHDLPLSDVSPDGSPVEYAVDLGGLAPALQFAMEPLTAGVPARDPLAARAIMPLLAGRYGADATRWSALADRLLPDDAHGPHVSMYGAEVRAGAPIRFKAWFYLNVTGPDGAFNLLYSALERMGTTHLWPVVQAHVHRAGEDVPFLLSLDLSDDPAARVKVYFRHFAADVEEVAAVLKAYPGFEPGEVRAFCKVMMGGRRRFSDQPAVTCVSLLDAQTFDRTAATLYVPLWTYAEHDGEVRQRVHRTLAAWPEALYRYDSVLAGIAHRGLDAGTGIHNYISWQPGRTRPRMKVYLSPEMHDVTPPPLGVSQQHHLSGQTTARGRTE.

L-tryptophan-binding residues include aspartate 55, valine 56, and glutamate 64. The active-site Nucleophile is glutamate 64. Glutamine 77, lysine 146, tryptophan 148, arginine 205, and lysine 207 together coordinate dimethylallyl diphosphate. Residue arginine 211 coordinates L-tryptophan. Tyrosine 274 contacts dimethylallyl diphosphate. Tyrosine 326 contacts L-tryptophan. Dimethylallyl diphosphate contacts are provided by arginine 337, lysine 339, and tyrosine 341. The region spanning 346–373 (MHDVTPPPLGVSQQHHLSGQTTARGRTE) is the FtsK domain.

Its function is as follows. Dimethylallyltryptophan synthase; part of the gene cluster that mediates the biosynthesis of cyclic heptapeptides, known as cyclomarins and also of cyclic dipeptides, called cyclomarazines, which have both antimicrobial and cytotoxic effects. Catalyzes the reverse N-prenylation of monomeric L-tryptophan with dimethylallyl diphosphate (DMAPP) to form N-(1,1-dimethylallyl)-tryptophan (r-N-DMAT). The formation of r-N-DMAT appears to proceed via the deprotonation of the indole nitrogen of tryptophan, which facilitates a nucleophilic attack on the carbocation that is forming on the dimethylallyl group as the diphosphate dissociates. The N-(1,1-dimethylallyl)-tryptophan produced by CymD is combined with a range of standard and nonproteinogenic amino acid substrates to synthesize the peptides, a process that is probably catalyzed by the non-canonical nonribosomal peptide synthetase (NRPS), CymA. Other proteins in the cluster catalyze further modifications of the peptides including CymV which catalyzes the oxidation of olefinic cyclomarins and cyclomarazines to their respective epoxide derivatives. Utilizes only DMAPP as the prenyl donor and has no requirement for divalent cations. The polypeptide is Dimethylallyltryptophan synthase CymD (Salinispora arenicola (strain CNS-205)).